The primary structure comprises 366 residues: Putative amino-acid transporter MJ1196 (366 aa).

A run of 11 helical transmembrane segments spans residues 14–34 (ITSI…LLFG), 37–57 (IIWG…PFAY), 87–107 (ILWL…EIVF), 111–131 (FNVS…ILGG), 141–161 (IFGI…GIKI), 173–193 (ILTI…TMPL), 205–225 (GLLV…LTIV), 247–267 (FLLA…LFTL), 291–311 (IPYY…IFDA), 314–334 (LVDM…LAVF), and 346–366 (LISM…FIIL).

The protein belongs to the amino acid-polyamine-organocation (APC) superfamily.

It is found in the cell membrane. This chain is Putative amino-acid transporter MJ1196, found in Methanocaldococcus jannaschii (strain ATCC 43067 / DSM 2661 / JAL-1 / JCM 10045 / NBRC 100440) (Methanococcus jannaschii).